A 137-amino-acid chain; its full sequence is Protein phosphatase 1 regulatory subunit 1B (137 aa).

The segment at 1 to 137 (DPKDRKKIQF…EEEEEEEDSQ (137 aa)) is disordered. Position 33 is a phosphothreonine; by PKA (Thr33). The segment covering 40–62 (LXEHSSPEEEASPHQRAAGEGHH) has biased composition (basic and acidic residues). Phosphoserine is present on residues Ser44 and Ser45. Residue Thr74 is modified to Phosphothreonine; by CDK5. A compositionally biased stretch (polar residues) spans 88–99 (HLQSISNLGENQ). At Ser101 the chain carries Phosphoserine. Residues 108–117 (GELRELGYPR) are compositionally biased toward basic and acidic residues. Residues 118–137 (EEEEEEEEDDEEEEEEEDSQ) are compositionally biased toward acidic residues. Residue Ser136 is modified to Phosphoserine.

Belongs to the protein phosphatase inhibitor 1 family. Post-translationally, phosphorylation of Thr-33 is required for activity. In terms of processing, dopamine- and cyclic AMP-regulated neuronal phosphoprotein.

Its subcellular location is the cytoplasm. Its function is as follows. Inhibitor of protein-phosphatase 1. This Sus scrofa (Pig) protein is Protein phosphatase 1 regulatory subunit 1B (PPP1R1B).